The primary structure comprises 577 residues: Arginine--tRNA ligase (577 aa).

The 'HIGH' region motif lies at Pro-122 to His-132.

The protein belongs to the class-I aminoacyl-tRNA synthetase family. As to quaternary structure, monomer.

It localises to the cytoplasm. The catalysed reaction is tRNA(Arg) + L-arginine + ATP = L-arginyl-tRNA(Arg) + AMP + diphosphate. This chain is Arginine--tRNA ligase, found in Escherichia fergusonii (strain ATCC 35469 / DSM 13698 / CCUG 18766 / IAM 14443 / JCM 21226 / LMG 7866 / NBRC 102419 / NCTC 12128 / CDC 0568-73).